A 513-amino-acid polypeptide reads, in one-letter code: ATP synthase subunit alpha 2 (513 aa).

Position 152–159 (152–159) interacts with ATP; it reads GDSKTGKT.

Belongs to the ATPase alpha/beta chains family. In terms of assembly, F-type ATPases have 2 components, CF(1) - the catalytic core - and CF(0) - the membrane proton channel. CF(1) has five subunits: alpha(3), beta(3), gamma(1), delta(1), epsilon(1). CF(0) has three main subunits: a(1), b(2) and c(9-12). The alpha and beta chains form an alternating ring which encloses part of the gamma chain. CF(1) is attached to CF(0) by a central stalk formed by the gamma and epsilon chains, while a peripheral stalk is formed by the delta and b chains.

The protein resides in the cell membrane. The enzyme catalyses ATP + H2O + 4 H(+)(in) = ADP + phosphate + 5 H(+)(out). In terms of biological role, produces ATP from ADP in the presence of a proton gradient across the membrane. The alpha chain is a regulatory subunit. The sequence is that of ATP synthase subunit alpha 2 from Mycoplasmopsis pulmonis (strain UAB CTIP) (Mycoplasma pulmonis).